Here is a 127-residue protein sequence, read N- to C-terminus: uncharacterized protein (127 aa).

3 helical membrane-spanning segments follow: residues 20–42 (NMIWLYEVYMLYKTYTSYFFMSS), 54–76 (IYFCYCANFIALFRVIFGTIFVY), and 91–110 (WILIYLKGSINSLLYMASFT).

It is found in the membrane. The protein localises to the cytoplasm. This is an uncharacterized protein from Schizosaccharomyces pombe (strain 972 / ATCC 24843) (Fission yeast).